The primary structure comprises 28 residues: Venom protein (28 aa).

The tract at residues 1-28 (KEGYPDGQNGKKIPCAINDNISKTXEQA) is disordered. Residues 19 to 28 (DNISKTXEQA) show a composition bias toward polar residues.

In terms of tissue distribution, expressed by the venom gland.

Its subcellular location is the secreted. Causes symptoms of mild intoxication and transient paralysis in insects (A.domestica). This is Venom protein from Rhopalurus junceus (Caribbean blue scorpion).